A 276-amino-acid polypeptide reads, in one-letter code: Rhomboid protease GlpG (276 aa).

6 consecutive transmembrane segments (helical) span residues 94-114, 142-162, 169-189, 192-212, 229-249, and 250-270; these read GPVT…MSLI, IFMH…WYLG, LGSG…GYVQ, FSGP…GYVW, LIIF…GMSM, and ANGA…VDTL. The active-site Nucleophile is the S201. H254 is an active-site residue.

Belongs to the peptidase S54 family.

The protein resides in the cell inner membrane. It carries out the reaction Cleaves type-1 transmembrane domains using a catalytic dyad composed of serine and histidine that are contributed by different transmembrane domains.. In terms of biological role, rhomboid-type serine protease that catalyzes intramembrane proteolysis. The polypeptide is Rhomboid protease GlpG (Salmonella choleraesuis (strain SC-B67)).